The sequence spans 250 residues: Acyl-coenzyme A diphosphatase fit1 (250 aa).

At 1 to 23 the chain is on the cytoplasmic side; that stretch reads MTEKTASHYWNEETSILKLRRKD. Residues 24–44 form a helical membrane-spanning segment; it reads ILLFEIYATTLLLGSIYSIYV. Residues 45-58 are Lumenal-facing; it reads DKWSITSYFGNSKN. Residues 59–79 form a helical membrane-spanning segment; it reads LINLIFVKRGWFWTSLVYFYH. The Cytoplasmic segment spans residues 80 to 95; the sequence is AWDQKRNKIDFKFISR. The helical transmembrane segment at 96–116 threads the bilayer; the sequence is YIVATLWWMFVTQWFIGPGLI. Over 117–160 the chain is Lumenal; the sequence is DRTFALSGGSCKNFDGDSSVFIPLTASTCKGLNGSWSGGHDLSG. Asparagine 149 is a glycosylation site (N-linked (GlcNAc...) asparagine). Histidine 161 is an active-site residue. The helical transmembrane segment at 161-181 threads the bilayer; the sequence is HVFLLTHSSLFMLSENFSFIL. The Cytoplasmic portion of the chain corresponds to 182–191; the sequence is NNGIKATSTK. A helical transmembrane segment spans residues 192-212; sequence VLFGLLGLWWWMLFVTASFYH. Histidine 212 is a catalytic residue. Position 213 (threonine 213) is a topological domain, lumenal. The chain crosses the membrane as a helical span at residues 214–234; that stretch reads TFEKCTGFFSGILEWSIVYVF. The Cytoplasmic segment spans residues 235-250; the sequence is SSRMPAVADLLGSSDY.

The protein belongs to the FIT family. Fungal FIT2B/SCS3 subfamily.

It localises to the endoplasmic reticulum membrane. It catalyses the reaction an acyl-CoA + H2O = an acyl-4'-phosphopantetheine + adenosine 3',5'-bisphosphate + 2 H(+). The catalysed reaction is (9Z)-octadecenoyl-CoA + H2O = S-(9Z-octadecenoyl)-4'-phosphopantetheine + adenosine 3',5'-bisphosphate + 2 H(+). It carries out the reaction (5Z,8Z,11Z,14Z)-eicosatetraenoyl-CoA + H2O = S-(5Z,8Z,11Z,14Z-eicosatetraenoyl)-4'-phosphopantetheine + adenosine 3',5'-bisphosphate + 2 H(+). The enzyme catalyses hexadecanoyl-CoA + H2O = S-hexadecanoyl-4'-phosphopantetheine + adenosine 3',5'-bisphosphate + 2 H(+). In terms of biological role, fatty acyl-coenzyme A (CoA) diphosphatase that hydrolyzes fatty acyl-CoA to yield acyl-4'-phosphopantetheine and adenosine 3',5'-bisphosphate. Preferentially hydrolyzes unsaturated long-chain acyl-CoA substrates in the endoplasmic reticulum (ER) lumen. This catalytic activity is required for maintaining ER structure and for lipid droplets (LDs) biogenesis, which are lipid storage organelles involved in maintaining lipid and energy homeostasis. May directly bind to diacylglycerol (DAGs) and triacylglycerol, which is also important for LD biogenesis. May support directional budding of nacent LDs from the ER into the cytosol by reducing DAG levels at sites of LD formation. May play a role in the regulation of cell morphology and cytoskeletal organization. The sequence is that of Acyl-coenzyme A diphosphatase fit1 from Schizosaccharomyces pombe (strain 972 / ATCC 24843) (Fission yeast).